A 109-amino-acid chain; its full sequence is Large ribosomal subunit protein uL22 (109 aa).

It belongs to the universal ribosomal protein uL22 family. Part of the 50S ribosomal subunit.

Its function is as follows. This protein binds specifically to 23S rRNA; its binding is stimulated by other ribosomal proteins, e.g. L4, L17, and L20. It is important during the early stages of 50S assembly. It makes multiple contacts with different domains of the 23S rRNA in the assembled 50S subunit and ribosome. The globular domain of the protein is located near the polypeptide exit tunnel on the outside of the subunit, while an extended beta-hairpin is found that lines the wall of the exit tunnel in the center of the 70S ribosome. In Azoarcus sp. (strain BH72), this protein is Large ribosomal subunit protein uL22.